Here is a 474-residue protein sequence, read N- to C-terminus: Trehalose-6-phosphate synthase (474 aa).

Residue Arg-10 participates in D-glucose 6-phosphate binding. UDP-alpha-D-glucose is bound at residue 22 to 23; sequence GG. The D-glucose 6-phosphate site is built by Tyr-77 and Asp-131. Residues Arg-263 and Lys-268 each coordinate UDP-alpha-D-glucose. A D-glucose 6-phosphate-binding site is contributed by Arg-301. UDP-alpha-D-glucose-binding positions include Phe-340 and 366-370; that span reads LVAKE.

This sequence belongs to the glycosyltransferase 20 family. As to quaternary structure, homotetramer.

The enzyme catalyses D-glucose 6-phosphate + UDP-alpha-D-glucose = alpha,alpha-trehalose 6-phosphate + UDP + H(+). The protein operates within glycan biosynthesis; trehalose biosynthesis. Functionally, probably involved in the osmoprotection via the biosynthesis of trehalose. Catalyzes the transfer of glucose from UDP-alpha-D-glucose (UDP-Glc) to D-glucose 6-phosphate (Glc-6-P) to form trehalose-6-phosphate. Acts with retention of the anomeric configuration of the UDP-sugar donor. This chain is Trehalose-6-phosphate synthase, found in Escherichia coli O157:H7.